We begin with the raw amino-acid sequence, 207 residues long: Small ribosomal subunit protein uS4 (207 aa).

The interval 33-54 (KLDSKPGQHGRTSGARTSDYGN) is disordered. Polar residues predominate over residues 42–53 (GRTSGARTSDYG). In terms of domain architecture, S4 RNA-binding spans 97 to 160 (SRLDNVVYRM…KKQVRIAEAL (64 aa)).

It belongs to the universal ribosomal protein uS4 family. In terms of assembly, part of the 30S ribosomal subunit. Contacts protein S5. The interaction surface between S4 and S5 is involved in control of translational fidelity.

In terms of biological role, one of the primary rRNA binding proteins, it binds directly to 16S rRNA where it nucleates assembly of the body of the 30S subunit. With S5 and S12 plays an important role in translational accuracy. This chain is Small ribosomal subunit protein uS4, found in Cupriavidus necator (strain ATCC 17699 / DSM 428 / KCTC 22496 / NCIMB 10442 / H16 / Stanier 337) (Ralstonia eutropha).